Reading from the N-terminus, the 163-residue chain is Ribosome maturation factor RimP (163 aa).

The protein belongs to the RimP family.

The protein localises to the cytoplasm. In terms of biological role, required for maturation of 30S ribosomal subunits. The sequence is that of Ribosome maturation factor RimP from Polynucleobacter asymbioticus (strain DSM 18221 / CIP 109841 / QLW-P1DMWA-1) (Polynucleobacter necessarius subsp. asymbioticus).